The chain runs to 624 residues: Actin-related protein 8 (624 aa).

Met1 carries the post-translational modification N-acetylmethionine. The segment covering 1 to 25 (MTQAEKGDTENGKEKGGEKEKEQRG) has biased composition (basic and acidic residues). Positions 1-29 (MTQAEKGDTENGKEKGGEKEKEQRGVKRP) are disordered. ATP-binding residues include Ser55 and Thr56. A Phosphoserine modification is found at Ser132. 283–286 (DVGD) contributes to the ATP binding site. Position 412 is a phosphoserine (Ser412). Positions 430-462 (SKQEQSAKATADRKSASKPIGFEGDLRGQSSDL) are disordered.

Belongs to the actin family. ARP8 subfamily. Component of the chromatin remodeling INO80 complex; specifically part of a complex module associated with the DBINO domain of INO80. Exists as monomers and dimers, but the dimer is most probably the biologically relevant form required for stable interactions with histones that exploits the twofold symmetry of the nucleosome core.

It localises to the nucleus. Its subcellular location is the chromosome. In terms of biological role, plays an important role in the functional organization of mitotic chromosomes. Exhibits low basal ATPase activity, and unable to polymerize. Its function is as follows. Proposed core component of the chromatin remodeling INO80 complex which is involved in transcriptional regulation, DNA replication and probably DNA repair. Required for the recruitment of INO80 (and probably the INO80 complex) to sites of DNA damage Strongly prefer nucleosomes and H3-H4 tetramers over H2A-H2B dimers, suggesting it may act as a nucleosome recognition module within the complex. The polypeptide is Actin-related protein 8 (ACTR8) (Pongo abelii (Sumatran orangutan)).